The sequence spans 466 residues: Integrator complex subunit 12 (466 aa).

A disordered region spans residues 41 to 101; that stretch reads KGNDSVYRPQ…EAEKRSADKM (61 aa). Residues 69–84 show a composition bias toward low complexity; it reads KASSSTPSSSMLSKPL. The span at 85–101 shows a compositional bias: basic and acidic residues; the sequence is TSEKLKKEAEKRSADKM. The PHD-type zinc-finger motif lies at 156–212; it reads GLACVVCRQMTVFSGNQLVECQECHNLYHQDCHKPQVTDKDVNDPRLVWYCARCTRQ. Disordered regions lie at residues 216-251 and 311-466; these read MAQK…ELKA and GTSS…KLKK. Composition is skewed to polar residues over residues 218–233 and 311–329; these read QKNQ…SAVS and GTSS…SVQK. The span at 338–373 shows a compositional bias: low complexity; sequence PSKPGSVSKSGSGGSSSSSTIPIKPLPPLILGKTGL. Residues 374 to 386 show a composition bias toward polar residues; it reads SRSMSSDNVSKTG. The segment covering 392-423 has biased composition (low complexity); that stretch reads PSSAGSVSSLSSQLGSNNGSSSAAGSNVTSSN. A compositionally biased stretch (basic residues) spans 453–466; sequence QMVKKKAAQKKLKK.

It belongs to the Integrator subunit 12 family. As to quaternary structure, component of the Integrator complex, composed of core subunits INTS1, INTS2, INTS3, INTS4, INTS5, INTS6, INTS7, INTS8, INTS9/RC74, INTS10, INTS11/CPSF3L, INTS12, INTS13, INTS14 and INTS15. The core complex associates with protein phosphatase 2A subunits PPP2CA and PPP2R1A, to form the Integrator-PP2A (INTAC) complex.

Its subcellular location is the nucleus. In terms of biological role, component of the integrator complex, a multiprotein complex that terminates RNA polymerase II (Pol II) transcription in the promoter-proximal region of genes. The integrator complex provides a quality checkpoint during transcription elongation by driving premature transcription termination of transcripts that are unfavorably configured for transcriptional elongation: the complex terminates transcription by (1) catalyzing dephosphorylation of the C-terminal domain (CTD) of Pol II subunit POLR2A/RPB1 and SUPT5H/SPT5, (2) degrading the exiting nascent RNA transcript via endonuclease activity and (3) promoting the release of Pol II from bound DNA. The integrator complex is also involved in terminating the synthesis of non-coding Pol II transcripts, such as enhancer RNAs (eRNAs), small nuclear RNAs (snRNAs), telomerase RNAs and long non-coding RNAs (lncRNAs). This Xenopus tropicalis (Western clawed frog) protein is Integrator complex subunit 12 (ints12).